Here is a 501-residue protein sequence, read N- to C-terminus: ATP-dependent rRNA helicase RRP3 (501 aa).

Positions 3–44 (KIVKRKEKKANDELTSLAEKIRAKALENQKKLIEAEKEGGSE) form a coiled coil. The tract at residues 36 to 79 (EAEKEGGSESDSEEDATAEKKKVLKSKSKSTVSTQNENTNEDES) is disordered. A phosphoserine mark is found at Ser-43, Ser-45, and Ser-47. The short motif at 81-109 (ESFSELNLVPELIQACKNLNYSKPTPIQS) is the Q motif element. The region spanning 112–284 (IPPALEGHDI…RASLTNPVKC (173 aa)) is the Helicase ATP-binding domain. Residue 125–132 (AQTGSGKT) participates in ATP binding. A DEAD box motif is present at residues 231–234 (DEAD). Residues 307–461 (LKNTYLIYLL…NIILTLRDSV (155 aa)) enclose the Helicase C-terminal domain. The disordered stretch occupies residues 480–501 (IARGKGRRGRMMTRENMDMGER). The segment covering 491-501 (MTRENMDMGER) has biased composition (basic and acidic residues).

The protein belongs to the DEAD box helicase family. DDX47/RRP3 subfamily. In terms of assembly, interacts with the SSU processome.

The protein localises to the nucleus. The catalysed reaction is ATP + H2O = ADP + phosphate + H(+). Its function is as follows. ATP-dependent rRNA helicase required for pre-ribosomal RNA processing. Involved in the maturation of the 35S-pre-rRNA and to its cleavage to mature 18S rRNA. This Saccharomyces cerevisiae (strain YJM789) (Baker's yeast) protein is ATP-dependent rRNA helicase RRP3.